The following is a 536-amino-acid chain: Probable monofunctional riboflavin biosynthesis protein RIBA 3, chloroplastic (536 aa).

A chloroplast-targeting transit peptide spans 1-43 (MDRVLLSSQLSSQTVVNTRVQQGSGGINSIGFAVIRKGSLKLR). The interval 44–310 (CYAIGGLGGG…IADLIRYRRK (267 aa)) is inactive DHBP synthase. D-ribulose 5-phosphate contacts are provided by residues 133–134 (GD), Asp138, and 248–252 (RAGHT). A GTP cyclohydrolase II region spans residues 311–536 (REKLVELIAV…GDQDEDDTHN (226 aa)). 361–365 (RVHSE) is a GTP binding site. Zn(2+)-binding residues include Cys366, Cys377, and Cys379. Residues Gln382, 405-407 (EGR), and Thr427 contribute to the GTP site. Residue Asp439 is the Proton acceptor; for GTP cyclohydrolase activity of the active site. Catalysis depends on Arg441, which acts as the Nucleophile; for GTP cyclohydrolase activity. GTP-binding residues include Thr462 and Lys467. The tract at residues 507 to 536 (YGSDLPGNVPEEFLNPDDIAGDQDEDDTHN) is disordered. Acidic residues predominate over residues 525 to 536 (IAGDQDEDDTHN).

The protein in the N-terminal section; belongs to the DHBP synthase family. It in the C-terminal section; belongs to the GTP cyclohydrolase II family. The cofactor is Zn(2+).

It localises to the plastid. Its subcellular location is the chloroplast. The catalysed reaction is GTP + 4 H2O = 2,5-diamino-6-hydroxy-4-(5-phosphoribosylamino)-pyrimidine + formate + 2 phosphate + 3 H(+). It functions in the pathway cofactor biosynthesis; riboflavin biosynthesis; 5-amino-6-(D-ribitylamino)uracil from GTP: step 1/4. In terms of biological role, involved in riboflavin biosynthesis. Catalyzes the conversion of GTP to 2,5-diamino-6-ribosylamino-4(3H)-pyrimidinone 5'-phosphate (DARP), formate and pyrophosphate. The protein is Probable monofunctional riboflavin biosynthesis protein RIBA 3, chloroplastic (RIBA3) of Oryza sativa subsp. japonica (Rice).